The chain runs to 266 residues: Large ribosomal subunit protein eL8 (266 aa).

The segment covering 1–11 (MPKGKKAKGKK) has biased composition (basic residues). Residues 1–21 (MPKGKKAKGKKVAPAPSVAKK) form a disordered region.

The protein belongs to the eukaryotic ribosomal protein eL8 family. In terms of assembly, component of the large ribosomal subunit.

It is found in the cytoplasm. Its function is as follows. Component of the large ribosomal subunit. The ribosome is a large ribonucleoprotein complex responsible for the synthesis of proteins in the cell. The sequence is that of Large ribosomal subunit protein eL8 (rpl7a) from Ictalurus punctatus (Channel catfish).